We begin with the raw amino-acid sequence, 125 residues long: Holo-[acyl-carrier-protein] synthase (125 aa).

Mg(2+) contacts are provided by D8 and E57.

The protein belongs to the P-Pant transferase superfamily. AcpS family. It depends on Mg(2+) as a cofactor.

The protein localises to the cytoplasm. The catalysed reaction is apo-[ACP] + CoA = holo-[ACP] + adenosine 3',5'-bisphosphate + H(+). Transfers the 4'-phosphopantetheine moiety from coenzyme A to a Ser of acyl-carrier-protein. The protein is Holo-[acyl-carrier-protein] synthase of Neisseria meningitidis serogroup A / serotype 4A (strain DSM 15465 / Z2491).